The following is a 777-amino-acid chain: Homoaconitase, mitochondrial (777 aa).

Residues 1-35 (MFKRTGSLLLRCRASRVPVIGRPLISLSTSSTSLS) constitute a mitochondrion transit peptide. The tract at residues 47–74 (LRRYTEASSSTTQTSPSSSSWPAPDAAP) is disordered. Positions 52-74 (EASSSTTQTSPSSSSWPAPDAAP) are enriched in low complexity. [4Fe-4S] cluster-binding residues include C398, C466, and C469.

The protein belongs to the aconitase/IPM isomerase family. Requires [4Fe-4S] cluster as cofactor.

It localises to the mitochondrion. The catalysed reaction is (2R,3S)-homoisocitrate = cis-homoaconitate + H2O. The protein operates within amino-acid biosynthesis; L-lysine biosynthesis via AAA pathway; L-alpha-aminoadipate from 2-oxoglutarate: step 3/5. Catalyzes the reversible hydration of cis-homoaconitate to (2R,3S)-homoisocitrate, a step in the alpha-aminoadipate pathway for lysine biosynthesis. The polypeptide is Homoaconitase, mitochondrial (lys4) (Aspergillus fumigatus (strain ATCC MYA-4609 / CBS 101355 / FGSC A1100 / Af293) (Neosartorya fumigata)).